The sequence spans 482 residues: MRYRPVIGLEIHVQLSTKTKAFCSCPADVFELPPNTAICPVCTGQPGALPVPNEEMIRFAVKTALALNCKIHKYSRFDRKNYFYPDLPKGYQISQYFYPIATEGFLEIDGDEGRKKVRIRRLHLEEDAGKLVHEGDSITRASYSLVDMNRCGVPLIEIVTEPDISSPREARVFMEKLRSIVRYLGVSTGDMEKGALRCDANISVVDTETGRQSNRVEVKNMNSFRFVEKALEYEFERIVKAMERGEDVERETRGWDMTTKTTVSMRGKEEESDYRYFPEPDIPPVVLSDEYLEEVKKELPELPDEKAKRFMREYDLPEYDAKVLTSSKELAEFFEECVKVVNRPKDLSNWIMTEVLRELNERNIEITESKLTPQHFADLFKLMDEGKISIKIAKEIFPEVFETGKMPSQIVEEKGLVQISDEKLIEELVKKAMEQNPKAVQDYKSGKKKAAGFFVGYVMRETKGKANPELTNRIIQKLLEGE.

It belongs to the GatB/GatE family. GatB subfamily. In terms of assembly, heterotrimer of A, B and C subunits.

The catalysed reaction is L-glutamyl-tRNA(Gln) + L-glutamine + ATP + H2O = L-glutaminyl-tRNA(Gln) + L-glutamate + ADP + phosphate + H(+). It catalyses the reaction L-aspartyl-tRNA(Asn) + L-glutamine + ATP + H2O = L-asparaginyl-tRNA(Asn) + L-glutamate + ADP + phosphate + 2 H(+). Its function is as follows. Allows the formation of correctly charged Asn-tRNA(Asn) or Gln-tRNA(Gln) through the transamidation of misacylated Asp-tRNA(Asn) or Glu-tRNA(Gln) in organisms which lack either or both of asparaginyl-tRNA or glutaminyl-tRNA synthetases. The reaction takes place in the presence of glutamine and ATP through an activated phospho-Asp-tRNA(Asn) or phospho-Glu-tRNA(Gln). The protein is Aspartyl/glutamyl-tRNA(Asn/Gln) amidotransferase subunit B of Thermotoga petrophila (strain ATCC BAA-488 / DSM 13995 / JCM 10881 / RKU-1).